Consider the following 1038-residue polypeptide: Ras GTPase-activating protein 1 (1038 aa).

The residue at position 1 (M1) is an N-acetylmethionine. A compositionally biased stretch (low complexity) spans 1–16 (MMAAEAGSEEGGPATA). 2 disordered regions span residues 1–24 (MMAA…AAAT) and 117–152 (ETLG…SLDG). Positions 124–135 (GFPPLPPPPLLP) are enriched in pro residues. The SH2 1 domain occupies 172-263 (WYHGKLDRTI…LKGEKLLYPV (92 aa)). Residues 270–332 (EDRRRVRAIL…VEDLVEEVGR (63 aa)) form the SH3 domain. One can recognise an SH2 2 domain in the interval 342–432 (WFHGKISKQE…VEGYYLKEPV (91 aa)). Residues 465–568 (NIVKKGYLLK…WMKGLQAFCS (104 aa)) form the PH domain. One can recognise a C2 domain in the interval 568–681 (SLRKSSPGTS…QKGHATDEWF (114 aa)). The residue at position 606 (Y606) is a Phosphotyrosine. In terms of domain architecture, Ras-GAP spans 755–965 (KLESLLLCTL…HRMIMFLDEL (211 aa)). A Phosphoserine modification is found at S822.

As to quaternary structure, interacts with SQSTM1. Interacts with SPSB1; the interaction does not promote degradation. Interacts with CAV2 (tyrosine phosphorylated form). Directly interacts with NCK1. Interacts with PDGFRB (tyrosine phosphorylated). Interacts (via SH2 domain) with the 'Tyr-9' phosphorylated form of PDPK1. Interacts with tyrosine-phosphorylated EPHB4. Post-translationally, phosphorylated by SRC and LCK. The phosphorylation SRC inhibits its ability to stimulate the Ras-GTPase activity, whereas phosphorylation by LCK does not display any effect on stimulation activity.

The protein resides in the cytoplasm. Its function is as follows. Inhibitory regulator of the Ras-cyclic AMP pathway. Stimulates the GTPase of normal but not oncogenic Ras p21. The protein is Ras GTPase-activating protein 1 (Rasa1) of Rattus norvegicus (Rat).